The primary structure comprises 707 residues: DNA ligase (707 aa).

Residues 48–52 (DAEYD), 97–98 (SI), and Glu-134 contribute to the NAD(+) site. Catalysis depends on Lys-136, which acts as the N6-AMP-lysine intermediate. NAD(+) contacts are provided by Arg-157, Glu-193, Lys-320, and Lys-344. 4 residues coordinate Zn(2+): Cys-438, Cys-441, Cys-456, and Cys-462. A BRCT domain is found at 621-707 (VAPKPLSGKT…DSPPDERIPA (87 aa)).

The protein belongs to the NAD-dependent DNA ligase family. LigA subfamily. The cofactor is Mg(2+). It depends on Mn(2+) as a cofactor.

The catalysed reaction is NAD(+) + (deoxyribonucleotide)n-3'-hydroxyl + 5'-phospho-(deoxyribonucleotide)m = (deoxyribonucleotide)n+m + AMP + beta-nicotinamide D-nucleotide.. Functionally, DNA ligase that catalyzes the formation of phosphodiester linkages between 5'-phosphoryl and 3'-hydroxyl groups in double-stranded DNA using NAD as a coenzyme and as the energy source for the reaction. It is essential for DNA replication and repair of damaged DNA. This is DNA ligase from Polaromonas naphthalenivorans (strain CJ2).